Consider the following 188-residue polypeptide: Acireductone dioxygenase (188 aa).

Positions 97, 99, 103, and 141 each coordinate Fe(2+). Positions 97, 99, 103, and 141 each coordinate Ni(2+).

This sequence belongs to the acireductone dioxygenase (ARD) family. As to quaternary structure, monomer. The cofactor is Fe(2+). Ni(2+) is required as a cofactor.

It carries out the reaction 1,2-dihydroxy-5-(methylsulfanyl)pent-1-en-3-one + O2 = 3-(methylsulfanyl)propanoate + CO + formate + 2 H(+). The catalysed reaction is 1,2-dihydroxy-5-(methylsulfanyl)pent-1-en-3-one + O2 = 4-methylsulfanyl-2-oxobutanoate + formate + 2 H(+). It participates in amino-acid biosynthesis; L-methionine biosynthesis via salvage pathway; L-methionine from S-methyl-5-thio-alpha-D-ribose 1-phosphate: step 5/6. Catalyzes 2 different reactions between oxygen and the acireductone 1,2-dihydroxy-3-keto-5-methylthiopentene (DHK-MTPene) depending upon the metal bound in the active site. Fe-containing acireductone dioxygenase (Fe-ARD) produces formate and 2-keto-4-methylthiobutyrate (KMTB), the alpha-ketoacid precursor of methionine in the methionine recycle pathway. Ni-containing acireductone dioxygenase (Ni-ARD) produces methylthiopropionate, carbon monoxide and formate, and does not lie on the methionine recycle pathway. The polypeptide is Acireductone dioxygenase (Xylella fastidiosa (strain M12)).